Here is a 365-residue protein sequence, read N- to C-terminus: NAD(P)H-quinone oxidoreductase subunit 1, chloroplastic (365 aa).

The next 6 membrane-spanning stretches (helical) occupy residues 30–50 (LVPI…IVWL), 104–124 (IAVI…HFVL), 129–149 (IGVF…LMSG), 253–273 (FGLF…FVAV), 302–322 (VFGT…FLFI), and 338–358 (LLNL…LLTT).

Belongs to the complex I subunit 1 family. NDH is composed of at least 16 different subunits, 5 of which are encoded in the nucleus.

It localises to the plastid. It is found in the chloroplast thylakoid membrane. The enzyme catalyses a plastoquinone + NADH + (n+1) H(+)(in) = a plastoquinol + NAD(+) + n H(+)(out). It carries out the reaction a plastoquinone + NADPH + (n+1) H(+)(in) = a plastoquinol + NADP(+) + n H(+)(out). NDH shuttles electrons from NAD(P)H:plastoquinone, via FMN and iron-sulfur (Fe-S) centers, to quinones in the photosynthetic chain and possibly in a chloroplast respiratory chain. The immediate electron acceptor for the enzyme in this species is believed to be plastoquinone. Couples the redox reaction to proton translocation, and thus conserves the redox energy in a proton gradient. The sequence is that of NAD(P)H-quinone oxidoreductase subunit 1, chloroplastic from Populus trichocarpa (Western balsam poplar).